We begin with the raw amino-acid sequence, 534 residues long: uncharacterized protein (534 aa).

Residues 1–22 (MGLRLLFSLICVFCISNIFTQA) form the signal peptide. Residue asparagine 31 is glycosylated (N-linked (GlcNAc...) asparagine). Disordered regions lie at residues 70-145 (PTYY…SSVS) and 176-418 (SSLS…SSAP). Asparagine 426 is a glycosylation site (N-linked (GlcNAc...) asparagine).

The protein localises to the endoplasmic reticulum. It localises to the cell membrane. This is an uncharacterized protein from Schizosaccharomyces pombe (strain 972 / ATCC 24843) (Fission yeast).